Reading from the N-terminus, the 405-residue chain is Multidrug resistance protein MdtH (405 aa).

The next 12 helical transmembrane spans lie at 13-33 (YFLLMDNMLVVMGFYVVFPLI), 34-54 (SIRFVDQLGWAALLVGIALGL), 78-95 (MIIAGMLMRALGFVLMGI), 99-116 (PWLLWLSCALSALGGTLF), 139-159 (LLMMQDSACSVIGALLGSWLL), 165-185 (LVCLAGAVLFVFAAIFNAWLL), 213-233 (YVLTLTGYYMLSVQVMLMLPI), 243-263 (AAVKWMYAIEAALSLSLLYPI), 277-297 (LMAGLTVMLLSLFPIGLIEDL), 299-319 (ALFMLIGLFYIGSIIAEPARE), 340-360 (LGLALGGAIGYSGGGWLYDVG), and 365-385 (IPQLPWFMLGLIGFITLLGLY).

It belongs to the major facilitator superfamily. DHA1 family. MdtH (TC 2.A.1.2.21) subfamily.

It localises to the cell inner membrane. In Sodalis glossinidius (strain morsitans), this protein is Multidrug resistance protein MdtH.